Here is a 1134-residue protein sequence, read N- to C-terminus: Tyrosine-protein kinase receptor Tie-1 (1134 aa).

The N-terminal stretch at 1–22 is a signal peptide; sequence MVWWGSSLLLPTLFLASHVGAS. At 23-755 the chain is on the extracellular side; it reads VDLTLLANLR…SRAAEEGLDQ (733 aa). The Ig-like C2-type 1 domain maps to 43–123; that stretch reads CVSGEAGAGR…VLYVHNSPGA (81 aa). 2 N-linked (GlcNAc...) asparagine glycosylation sites follow: N81 and N159. 3 consecutive EGF-like domains span residues 212-254, 256-301, and 303-343; these read GCGA…TRCE, ACRE…SQCQ, and ACAP…VHCE. Disulfide bonds link C226/C235, C229/C242, C244/C253, C266/C276, C270/C289, C291/C300, C313/C325, C319/C331, and C333/C342. In terms of domain architecture, Ig-like C2-type 2 spans 349–440; the sequence is PQILSMATEV…GQDSRRFKVN (92 aa). 3 Fibronectin type-III domains span residues 444–543, 546–638, and 642–736; these read PPVP…CPEP, QPWL…LPPS, and APRH…LGNG. N-linked (GlcNAc...) asparagine glycosylation is found at N501, N592, and N705. The helical transmembrane segment at 756–780 threads the bilayer; the sequence is QLVLAVVGSVSATCLTILAALLALV. At 781–1134 the chain is on the cytoplasmic side; it reads CIRRSCLHRR…AGIDATAEEA (354 aa). Positions 835 to 1114 constitute a Protein kinase domain; the sequence is ITFEDLIGEG…RMLEARKAYV (280 aa). ATP contacts are provided by residues 841–849 and K866; that span reads IGEGNFGQV. Residue D975 is the Proton acceptor of the active site. A Phosphotyrosine; by autocatalysis modification is found at Y1003.

Belongs to the protein kinase superfamily. Tyr protein kinase family. Tie subfamily. In terms of assembly, heterodimer with TEK/TIE2. Interacts with SVEP1 (via C-terminus). In terms of processing, phosphorylated on tyrosine residues in response to ANGPT1, most likely by TEK/TIE2. Specifically expressed in developing vascular endothelial cells. Abundantly expressed in lung and heart, moderately in brain, liver and kidney, and weakly in thymus, spleen and testis.

It is found in the cell membrane. It catalyses the reaction L-tyrosyl-[protein] + ATP = O-phospho-L-tyrosyl-[protein] + ADP + H(+). Its function is as follows. Transmembrane tyrosine-protein kinase that may modulate TEK/TIE2 activity and contribute to the regulation of angiogenesis. The chain is Tyrosine-protein kinase receptor Tie-1 (Tie1) from Mus musculus (Mouse).